The sequence spans 103 residues: Sec-independent protein translocase protein TatA (103 aa).

A helical membrane pass occupies residues 1 to 21; sequence MGNIFSPTHLIVILLIIIVLF. The segment at 77-103 is disordered; the sequence is KRATTRVKGSSSSRKGKTSVVKKQRVK. A compositionally biased stretch (basic residues) spans 90–103; the sequence is RKGKTSVVKKQRVK.

It belongs to the TatA/E family. In terms of assembly, the Tat system comprises two distinct complexes: a TatABC complex, containing multiple copies of TatA, TatB and TatC subunits, and a separate TatA complex, containing only TatA subunits. Substrates initially bind to the TatABC complex, which probably triggers association of the separate TatA complex to form the active translocon.

It is found in the cell inner membrane. Part of the twin-arginine translocation (Tat) system that transports large folded proteins containing a characteristic twin-arginine motif in their signal peptide across membranes. TatA could form the protein-conducting channel of the Tat system. This chain is Sec-independent protein translocase protein TatA, found in Bartonella henselae (strain ATCC 49882 / DSM 28221 / CCUG 30454 / Houston 1) (Rochalimaea henselae).